Here is a 455-residue protein sequence, read N- to C-terminus: MSEIKLKYFGTDGVRGIANETLTPELAFRLGRTGGAILTRHAESDKKPVVIVGRDTRISGDMLQQAMIAGFLSVGIDVLRLGVITTPAVAFLVQNLEADAGVQITASHNPAADNGIKFFGKDGFKLSDELEYEIEQLLDSPEDTLPRPSANGLGVASNYPEGALKYMSFLQKTIPTDLSGMQVALDGANGATSDLLPRLFADLNADFVTMGTEPNGLNINDGVGSTHPEALADLVKSSEVQAGLAFDGDGDRLIAVDENGDIVDGDKIMYITGKFMNEQGRLKHSTVVSTVMSNIGFYKALAAHDMTSVKTAVGDRYVMAEMIKSGYNLGGEQSGHIIFRDWATTGDGLLTALQLLYVMKETGQKLSELAADVQVYPQKLVNIAVADKVAIQKNPAVLAKIAEVEAEMAGDGRVLVRPSGTESLLRVMAEAPTTELVEKYVEAIAAVVRDQANVS.

The active-site Phosphoserine intermediate is the Ser-107. The Mg(2+) site is built by Ser-107, Asp-247, Asp-249, and Asp-251. Ser-107 is modified (phosphoserine).

It belongs to the phosphohexose mutase family. Requires Mg(2+) as cofactor. Post-translationally, activated by phosphorylation.

The enzyme catalyses alpha-D-glucosamine 1-phosphate = D-glucosamine 6-phosphate. In terms of biological role, catalyzes the conversion of glucosamine-6-phosphate to glucosamine-1-phosphate. This is Phosphoglucosamine mutase from Leuconostoc citreum (strain KM20).